The primary structure comprises 485 residues: Aspartyl/glutamyl-tRNA(Asn/Gln) amidotransferase subunit B (485 aa).

It belongs to the GatB/GatE family. GatB subfamily. As to quaternary structure, heterotrimer of A, B and C subunits.

It carries out the reaction L-glutamyl-tRNA(Gln) + L-glutamine + ATP + H2O = L-glutaminyl-tRNA(Gln) + L-glutamate + ADP + phosphate + H(+). It catalyses the reaction L-aspartyl-tRNA(Asn) + L-glutamine + ATP + H2O = L-asparaginyl-tRNA(Asn) + L-glutamate + ADP + phosphate + 2 H(+). In terms of biological role, allows the formation of correctly charged Asn-tRNA(Asn) or Gln-tRNA(Gln) through the transamidation of misacylated Asp-tRNA(Asn) or Glu-tRNA(Gln) in organisms which lack either or both of asparaginyl-tRNA or glutaminyl-tRNA synthetases. The reaction takes place in the presence of glutamine and ATP through an activated phospho-Asp-tRNA(Asn) or phospho-Glu-tRNA(Gln). This is Aspartyl/glutamyl-tRNA(Asn/Gln) amidotransferase subunit B from Ruminiclostridium cellulolyticum (strain ATCC 35319 / DSM 5812 / JCM 6584 / H10) (Clostridium cellulolyticum).